A 412-amino-acid polypeptide reads, in one-letter code: Multifunctional CCA protein (412 aa).

2 residues coordinate ATP: G8 and R11. Positions 8 and 11 each coordinate CTP. Positions 21 and 23 each coordinate Mg(2+). ATP-binding residues include R91, R137, and R140. 3 residues coordinate CTP: R91, R137, and R140. The region spanning 228–329 is the HD domain; that stretch reads TGIHTMMVLA…LKVFDKADAW (102 aa).

The protein belongs to the tRNA nucleotidyltransferase/poly(A) polymerase family. Bacterial CCA-adding enzyme type 1 subfamily. In terms of assembly, monomer. Can also form homodimers and oligomers. Requires Mg(2+) as cofactor. The cofactor is Ni(2+).

It carries out the reaction a tRNA precursor + 2 CTP + ATP = a tRNA with a 3' CCA end + 3 diphosphate. The catalysed reaction is a tRNA with a 3' CCA end + 2 CTP + ATP = a tRNA with a 3' CCACCA end + 3 diphosphate. In terms of biological role, catalyzes the addition and repair of the essential 3'-terminal CCA sequence in tRNAs without using a nucleic acid template. Adds these three nucleotides in the order of C, C, and A to the tRNA nucleotide-73, using CTP and ATP as substrates and producing inorganic pyrophosphate. tRNA 3'-terminal CCA addition is required both for tRNA processing and repair. Also involved in tRNA surveillance by mediating tandem CCA addition to generate a CCACCA at the 3' terminus of unstable tRNAs. While stable tRNAs receive only 3'-terminal CCA, unstable tRNAs are marked with CCACCA and rapidly degraded. The polypeptide is Multifunctional CCA protein (Aeromonas hydrophila subsp. hydrophila (strain ATCC 7966 / DSM 30187 / BCRC 13018 / CCUG 14551 / JCM 1027 / KCTC 2358 / NCIMB 9240 / NCTC 8049)).